Consider the following 715-residue polypeptide: MFEKLSQAACSEPFAFLGPFIDPTQGALRVWMPGATGVALVLEGQPRIALEREKESAFILKADLNLHLTHYQLAIDWNGIEQLVDDPYQYHGIYAEYDDLHTPKTMYQHMGSQFMTLERDGKSISGIRFLVYAPHATAVSLVGSFNDWDGRRHPMQRLDYGIWGLFIPGLTEGVSYKFEMKGPKGEGLPHKADPWGFYAEQYPSFASVTYDHARYQWQDAQWQTRPVTEKRKEALSFYELHAGSWKRNEQGEFLNYRELAAELVPYLVDMGYTHVELMPVSEHPFYGSWGYQPVGLFAPTSRYGSPDDFKFFVDACHQAGIGVVLDWVPAHFPSDDHGLANFDGTPLFHDPDPRRGWHQDWNSFIYDLGREQVRRFLVSNALYWFEQFHIDGIRVDAVASMLYLDYSRSHGQWIPNMDGGNENYDAIATLKWMNEEVYKYFPNAMTIAEESTAFPGVSAPTFMGGLGFGFKWNMGWMHDSLSYIKEEPVHRKYHHNTLTFPLVYAHSENYVLSLSHDEVVYGKGSIHNKMPGDEWQQTANLRAYFGYMYGQPGKKLNFMGAEIGQTAEWNHDDQLQWFLLDFPRHQGVQALTRDLNHLYRNEAALHDQDCIPAGFEWRLQDAAEQSIIAHERISEAGERILVVSNFTPVPRDEFRLGVPNKGRYQLLLNTDDSKYAGSGYEVVVDVKSEAVVSEDLAQSIVLRLPPLSTLFYKLA.

Residue aspartate 396 is the Nucleophile of the active site. The Proton donor role is filled by glutamate 449.

It belongs to the glycosyl hydrolase 13 family. GlgB subfamily. In terms of assembly, monomer.

The enzyme catalyses Transfers a segment of a (1-&gt;4)-alpha-D-glucan chain to a primary hydroxy group in a similar glucan chain.. Its pathway is glycan biosynthesis; glycogen biosynthesis. Catalyzes the formation of the alpha-1,6-glucosidic linkages in glycogen by scission of a 1,4-alpha-linked oligosaccharide from growing alpha-1,4-glucan chains and the subsequent attachment of the oligosaccharide to the alpha-1,6 position. The protein is 1,4-alpha-glucan branching enzyme GlgB of Vibrio vulnificus (strain YJ016).